We begin with the raw amino-acid sequence, 200 residues long: Glycerol-3-phosphate acyltransferase (200 aa).

Helical transmembrane passes span 2–22 (FNIPAVAVSYLIGSLSFAVIV), 51–71 (KAAALTLLGDAAKGLVAVLLA), 84–104 (AIAAVALAALVGHMWPVFFGF), 114–134 (LGVLLALSPATALVCALIWLV), and 158–178 (LFFMPHTSWIFATLAIAILVL).

It belongs to the PlsY family. Probably interacts with PlsX.

The protein resides in the cell inner membrane. It catalyses the reaction an acyl phosphate + sn-glycerol 3-phosphate = a 1-acyl-sn-glycero-3-phosphate + phosphate. Its pathway is lipid metabolism; phospholipid metabolism. In terms of biological role, catalyzes the transfer of an acyl group from acyl-phosphate (acyl-PO(4)) to glycerol-3-phosphate (G3P) to form lysophosphatidic acid (LPA). This enzyme utilizes acyl-phosphate as fatty acyl donor, but not acyl-CoA or acyl-ACP. This chain is Glycerol-3-phosphate acyltransferase, found in Neisseria gonorrhoeae (strain ATCC 700825 / FA 1090).